The sequence spans 98 residues: Integration host factor subunit alpha (98 aa).

The span at Asp53–Glu69 shows a compositional bias: basic and acidic residues. Residues Asp53–Ile73 form a disordered region.

Belongs to the bacterial histone-like protein family. As to quaternary structure, heterodimer of an alpha and a beta chain.

Its function is as follows. This protein is one of the two subunits of integration host factor, a specific DNA-binding protein that functions in genetic recombination as well as in transcriptional and translational control. The polypeptide is Integration host factor subunit alpha (Aliivibrio fischeri (strain ATCC 700601 / ES114) (Vibrio fischeri)).